The sequence spans 305 residues: Mitogen-activated protein kinase kinase 10 (305 aa).

Ser-34 bears the Phosphoserine mark. Positions 48 to 302 constitute a Protein kinase domain; sequence LEKLSVLGQG…VEELLRHSFV (255 aa). ATP is bound by residues 54 to 62 and Lys-77; that span reads LGQGSGGTV. Asp-165 acts as the Proton acceptor in catalysis. Thr-200 carries the post-translational modification Phosphothreonine.

The protein belongs to the protein kinase superfamily. STE Ser/Thr protein kinase family. MAP kinase kinase subfamily. In terms of assembly, interacts with P.syringae type III effector HopF2.

The enzyme catalyses L-seryl-[protein] + ATP = O-phospho-L-seryl-[protein] + ADP + H(+). It catalyses the reaction L-threonyl-[protein] + ATP = O-phospho-L-threonyl-[protein] + ADP + H(+). It carries out the reaction L-tyrosyl-[protein] + ATP = O-phospho-L-tyrosyl-[protein] + ADP + H(+). This is Mitogen-activated protein kinase kinase 10 (MKK10) from Arabidopsis thaliana (Mouse-ear cress).